A 218-amino-acid chain; its full sequence is 3,4-dihydroxy-2-butanone 4-phosphate synthase (218 aa).

Residues 37–38 (RE), aspartate 42, 150–154 (RSGHT), and glutamate 174 each bind D-ribulose 5-phosphate. A Mg(2+)-binding site is contributed by glutamate 38. Histidine 153 serves as a coordination point for Mg(2+).

It belongs to the DHBP synthase family. As to quaternary structure, homodimer. It depends on Mg(2+) as a cofactor. The cofactor is Mn(2+).

It carries out the reaction D-ribulose 5-phosphate = (2S)-2-hydroxy-3-oxobutyl phosphate + formate + H(+). It functions in the pathway cofactor biosynthesis; riboflavin biosynthesis; 2-hydroxy-3-oxobutyl phosphate from D-ribulose 5-phosphate: step 1/1. In terms of biological role, catalyzes the conversion of D-ribulose 5-phosphate to formate and 3,4-dihydroxy-2-butanone 4-phosphate. In Hamiltonella defensa subsp. Acyrthosiphon pisum (strain 5AT), this protein is 3,4-dihydroxy-2-butanone 4-phosphate synthase.